A 206-amino-acid chain; its full sequence is ATP-dependent Clp protease proteolytic subunit (206 aa).

The active-site Nucleophile is the serine 107. Histidine 132 is an active-site residue.

It belongs to the peptidase S14 family. Fourteen ClpP subunits assemble into 2 heptameric rings which stack back to back to give a disk-like structure with a central cavity, resembling the structure of eukaryotic proteasomes.

It localises to the cytoplasm. The enzyme catalyses Hydrolysis of proteins to small peptides in the presence of ATP and magnesium. alpha-casein is the usual test substrate. In the absence of ATP, only oligopeptides shorter than five residues are hydrolyzed (such as succinyl-Leu-Tyr-|-NHMec, and Leu-Tyr-Leu-|-Tyr-Trp, in which cleavage of the -Tyr-|-Leu- and -Tyr-|-Trp bonds also occurs).. Its function is as follows. Cleaves peptides in various proteins in a process that requires ATP hydrolysis. Has a chymotrypsin-like activity. Plays a major role in the degradation of misfolded proteins. The protein is ATP-dependent Clp protease proteolytic subunit of Idiomarina loihiensis (strain ATCC BAA-735 / DSM 15497 / L2-TR).